Consider the following 842-residue polypeptide: Cation/H(+) antiporter 20 (842 aa).

Transmembrane regions (helical) follow at residues 26–46 (FPLL…LAVL), 55–75 (VIAE…RNMA), 86–106 (MPIL…LVGL), 122–142 (GIAV…AFVI), 155–175 (YAEF…PVLA), 193–213 (MAAA…AVAL), 228–248 (LVSL…LVVI), 283–303 (FATD…GLTI), 320–340 (FVSG…TDVA), 353–373 (LVVV…AVMV), 380–400 (ALTL…VLNI), and 413–433 (AILV…VMAI). Positions 585–595 (DHGHSHHHQDG) are enriched in basic and acidic residues. A disordered region spans residues 585-605 (DHGHSHHHQDGGGDGNVPENV).

It belongs to the monovalent cation:proton antiporter 2 (CPA2) transporter (TC 2.A.37) family. CHX (TC 2.A.37.4) subfamily. Expressed in leaves and stems. Preferentially expressed in guards cells.

It localises to the endomembrane system. Functionally, operates as a K(+)/H(+) antiporter that maintains K(+) homeostasis in guard cells and could regulate pH. Plays a critical role in osmoregulation through the control of stomates opening. The protein is Cation/H(+) antiporter 20 (CHX20) of Arabidopsis thaliana (Mouse-ear cress).